Here is a 126-residue protein sequence, read N- to C-terminus: Glycine cleavage system H protein (126 aa).

Residues 22–104 (VAYVGITDYA…YGKGWLIKIS (83 aa)) enclose the Lipoyl-binding domain. Residue K63 is modified to N6-lipoyllysine.

The protein belongs to the GcvH family. As to quaternary structure, the glycine cleavage system is composed of four proteins: P, T, L and H. Requires (R)-lipoate as cofactor.

The glycine cleavage system catalyzes the degradation of glycine. The H protein shuttles the methylamine group of glycine from the P protein to the T protein. This Parabacteroides distasonis (strain ATCC 8503 / DSM 20701 / CIP 104284 / JCM 5825 / NCTC 11152) protein is Glycine cleavage system H protein.